Here is an 80-residue protein sequence, read N- to C-terminus: Protein pegasus (80 aa).

The N-terminal stretch at 1-22 (MKLSAVLLAIALLALSLVQCLG) is a signal peptide. Residues 24–80 (PDPSTKCVMECDTQEYRSICAADDKGSTKTYRNLCVMKTENCLQNANFQKISDKECP) form the Kazal-like domain. 3 disulfide bridges follow: C30–C65, C34–C58, and C43–C79.

In terms of assembly, interacts with wg; the interaction facilitates short-range diffusion of wg. In terms of tissue distribution, strongly expressed in the developing fly wing but is excluded from the presumptive wing margin.

It is found in the secreted. Functionally, increases short-range diffusion of the wingless/wg protein, enhancing its signaling and expression of target genes required for wing margin morphogenesis. May act as a serine protease inhibitor since it possess the Kazal serine protease inhibitor signature. The protein is Protein pegasus of Drosophila melanogaster (Fruit fly).